A 476-amino-acid chain; its full sequence is Probable flippase AglR (476 aa).

A run of 14 helical transmembrane segments spans residues 7–29 (ASAL…TIYV), 34–56 (GVGA…IPAV), 83–103 (VLTG…SPFV), 112–132 (TQLV…LGGL), 146–166 (ALWG…GVGV), 168–188 (ALFY…VYSL), 222–242 (WLDT…IYEV), 246–266 (ISAL…PTIS), 287–307 (VAGV…GDIL), 310–330 (YGPS…LSVV), 354–373 (FRIG…SLIP), 377–396 (VIGA…ILAV), 409–429 (VSAI…LFTI), and 439–459 (IEVV…LLSL).

Belongs to the AglR/Agl15 family.

The protein localises to the cell membrane. It functions in the pathway cell surface structure biogenesis; S-layer biogenesis. Involved in the assembly of a N-linked pentasaccharide that decorates the S-layer glycoprotein and flagellins. Probably mediates or contributes to the translocation of the dolichol-phosphate-mannose across the membrane. This is Probable flippase AglR (aglR) from Haloferax volcanii (strain ATCC 29605 / DSM 3757 / JCM 8879 / NBRC 14742 / NCIMB 2012 / VKM B-1768 / DS2) (Halobacterium volcanii).